Here is a 464-residue protein sequence, read N- to C-terminus: Argininosuccinate lyase (464 aa).

Belongs to the lyase 1 family. Argininosuccinate lyase subfamily.

It localises to the cytoplasm. It carries out the reaction 2-(N(omega)-L-arginino)succinate = fumarate + L-arginine. It participates in amino-acid biosynthesis; L-arginine biosynthesis; L-arginine from L-ornithine and carbamoyl phosphate: step 3/3. This is Argininosuccinate lyase from Ectopseudomonas mendocina (strain ymp) (Pseudomonas mendocina).